The sequence spans 1305 residues: Contactin-associated protein like 5-4 (1305 aa).

The first 24 residues, 1-24 (MNSVRRLNSILTLVLSGLWHLGLT), serve as a signal peptide directing secretion. The Extracellular segment spans residues 25 to 1237 (ATNYNCDEPL…LTDTVQSDSA (1213 aa)). Positions 30 to 174 (CDEPLASFLS…IGMRVEVYGC (145 aa)) constitute an F5/8 type C domain. Cysteines 30 and 174 form a disulfide. Laminin G-like domains lie at 180-360 (IVGF…TFSC) and 367-544 (PITF…IDLC). An N-linked (GlcNAc...) asparagine glycan is attached at Asn282. Residues Cys329 and Cys360 are joined by a disulfide bond. Asn496 carries an N-linked (GlcNAc...) asparagine glycan. Intrachain disulfides connect Cys512–Cys544, Cys550–Cys561, and Cys555–Cys570. Positions 546–583 (IKDRCLPNYCEHGGHCAQNWTTFYCNCSDTGYTGATCH) constitute an EGF-like 1 domain. N-linked (GlcNAc...) asparagine glycosylation occurs at Asn571. Cys572 and Cys582 are oxidised to a cystine. A Fibrinogen C-terminal domain is found at 584 to 790 (DSVYEQSCEV…LRCYGDRHFW (207 aa)). A glycan (N-linked (GlcNAc...) asparagine) is linked at Asn622. The region spanning 791-956 (NAVSFTTEAS…KLMSGVTPGC (166 aa)) is the Laminin G-like 3 domain. 4 disulfides stabilise this stretch: Cys929/Cys956, Cys960/Cys973, Cys967/Cys982, and Cys984/Cys994. The region spanning 957–995 (LGHCSSYGSNCLNGGKCVEKQSGYSCDCTNSPNEGPFCQ) is the EGF-like 2 domain. The Laminin G-like 4 domain maps to 1014 to 1198 (EPYLVIKNTS…VQGTLTESGC (185 aa)). Asn1057 carries an N-linked (GlcNAc...) asparagine glycan. Cys1163 and Cys1198 form a disulfide bridge. A helical membrane pass occupies residues 1238–1258 (VIGGIIALVTFVTFCVIGIMI). At 1259–1305 (HFLYLHKQSHCTNQTKEKEYSENLSNSFRNAIDLQNTASECKREYFI) the chain is on the cytoplasmic side.

Belongs to the neurexin family.

The protein resides in the membrane. May play a role in the correct development and proper functioning of the peripheral and central nervous system and be involved in cell adhesion and intercellular communication. The polypeptide is Contactin-associated protein like 5-4 (Cntnap5d) (Rattus norvegicus (Rat)).